Here is a 428-residue protein sequence, read N- to C-terminus: D-amino acid dehydrogenase (428 aa).

3 to 17 (VVILGSGVVGVASAY) serves as a coordination point for FAD.

Belongs to the DadA oxidoreductase family. The cofactor is FAD.

It carries out the reaction a D-alpha-amino acid + A + H2O = a 2-oxocarboxylate + AH2 + NH4(+). The protein operates within amino-acid degradation; D-alanine degradation; NH(3) and pyruvate from D-alanine: step 1/1. Oxidative deamination of D-amino acids. This chain is D-amino acid dehydrogenase, found in Burkholderia cenocepacia (strain HI2424).